The following is a 154-amino-acid chain: Transcriptional repressor NrdR (154 aa).

A zinc finger spans residues 3 to 34 (CPFCRHPDSRVVDSREADEGQAIRRRRSCPEC). The 91-residue stretch at 46–136 (LAVVKRSGVT…VYRGFSSAED (91 aa)) folds into the ATP-cone domain.

Belongs to the NrdR family. Requires Zn(2+) as cofactor.

Functionally, negatively regulates transcription of bacterial ribonucleotide reductase nrd genes and operons by binding to NrdR-boxes. The polypeptide is Transcriptional repressor NrdR (Mycobacteroides abscessus (strain ATCC 19977 / DSM 44196 / CCUG 20993 / CIP 104536 / JCM 13569 / NCTC 13031 / TMC 1543 / L948) (Mycobacterium abscessus)).